A 339-amino-acid polypeptide reads, in one-letter code: Phosphate acyltransferase (339 aa).

Belongs to the PlsX family. In terms of assembly, homodimer. Probably interacts with PlsY.

It localises to the cytoplasm. It carries out the reaction a fatty acyl-[ACP] + phosphate = an acyl phosphate + holo-[ACP]. Its pathway is lipid metabolism; phospholipid metabolism. In terms of biological role, catalyzes the reversible formation of acyl-phosphate (acyl-PO(4)) from acyl-[acyl-carrier-protein] (acyl-ACP). This enzyme utilizes acyl-ACP as fatty acyl donor, but not acyl-CoA. The polypeptide is Phosphate acyltransferase (Pasteurella multocida (strain Pm70)).